Here is a 155-residue protein sequence, read N- to C-terminus: Sec-independent protein translocase protein TatB (155 aa).

The chain crosses the membrane as a helical span at residues 1–21; the sequence is MIDLGISKIALIGAVALIVIG. Disordered stretches follow at residues 81 to 103 and 131 to 155; these read ASDF…LPGF and SGIR…SRKA. A compositionally biased stretch (polar residues) spans 89–98; sequence SETTGSTSSD.

The protein belongs to the TatB family. The Tat system comprises two distinct complexes: a TatABC complex, containing multiple copies of TatA, TatB and TatC subunits, and a separate TatA complex, containing only TatA subunits. Substrates initially bind to the TatABC complex, which probably triggers association of the separate TatA complex to form the active translocon.

It is found in the cell inner membrane. Its function is as follows. Part of the twin-arginine translocation (Tat) system that transports large folded proteins containing a characteristic twin-arginine motif in their signal peptide across membranes. Together with TatC, TatB is part of a receptor directly interacting with Tat signal peptides. TatB may form an oligomeric binding site that transiently accommodates folded Tat precursor proteins before their translocation. The polypeptide is Sec-independent protein translocase protein TatB (Polaromonas naphthalenivorans (strain CJ2)).